The primary structure comprises 368 residues: Ribosomal RNA large subunit methyltransferase M (368 aa).

S-adenosyl-L-methionine contacts are provided by residues serine 189, 222–225 (CPGG), aspartate 241, aspartate 261, and aspartate 278. The active-site Proton acceptor is the lysine 307.

The protein belongs to the class I-like SAM-binding methyltransferase superfamily. RNA methyltransferase RlmE family. RlmM subfamily. As to quaternary structure, monomer.

It localises to the cytoplasm. The enzyme catalyses cytidine(2498) in 23S rRNA + S-adenosyl-L-methionine = 2'-O-methylcytidine(2498) in 23S rRNA + S-adenosyl-L-homocysteine + H(+). Catalyzes the 2'-O-methylation at nucleotide C2498 in 23S rRNA. The chain is Ribosomal RNA large subunit methyltransferase M from Yersinia pseudotuberculosis serotype O:1b (strain IP 31758).